The primary structure comprises 358 residues: Na(+)/H(+) exchange regulatory cofactor NHE-RF1 (358 aa).

Ser2 is subject to N-acetylserine. 2 positions are modified to phosphoserine: Ser2 and Ser46. The region spanning 14–94 (LCCLEKGPNG…AVRLLVVDPE (81 aa)) is the PDZ 1 domain. Residues 114-132 (QEAPGQAEPPAAAEVQGAG) are compositionally biased toward low complexity. The tract at residues 114–192 (QEAPGQAEPP…DPDSPAEASG (79 aa)) is disordered. The span at 135–152 (NEPREADKSHPEQRELRP) shows a compositional bias: basic and acidic residues. The PDZ 2 domain maps to 154-234 (LCTMKKGPSG…ETKLLVVDRE (81 aa)). 5 positions are modified to phosphoserine: Ser162, Ser269, Ser280, Ser290, and Ser291. The interval 277–358 (ALESPRPALV…SKKNELFSNL (82 aa)) is disordered. A compositionally biased stretch (polar residues) spans 288–306 (SASSDTSEELNSQDSPPKQ). Thr293 is modified (phosphothreonine). Residues Ser294, Ser299, and Ser302 each carry the phosphoserine modification. Positions 307 to 319 (DSTAPSSTSSSDP) are enriched in low complexity. Over residues 348 to 358 (WSKKNELFSNL) the composition is skewed to basic and acidic residues.

Homodimer, and heterodimer with NHERF2. Binds the N-termini of EZR, RDX and MSN. Binds the C-termini of PDGFRA, PDGFRB, ADRB2, NOS2 and CFTR. Binds ARHGAP17, EPI64, RACK1, OPRK1, GNAQ, CTNNB1 and PLCB3. Binds PDZK1. Interacts with CLCN3. Binds the C-terminus of PAG1. In resting T-cells, part of a PAG1-NHERF1-MSN complex which is disrupted upon TCR activation. Forms a complex with CFTR and SLC4A7. Forms a complex with SLC4A7 and ATP6V1B1. Interacts with TRPC4 (via the PDZ-binding domain). Directly interacts with HTR4. Interacts (via the PDZ 1 domain) with PODXL (via the C-terminal PDZ-binding motif DTHL); interaction is not detected in glomerular epithelium cells. Interacts (via the PDZ 1 domain) with PODXL (via the C-terminal PDZ-binding motif DTHL); the interaction take place early in the secretory pathway and is necessary for its apical membrane sorting. Interacts with SLC26A3. Interacts with MCC. Interacts with SLC34A1. Interacts (via the PDZ domains) with SLC26A6 isoform 4 and isoform 5. Interacts (via PDZ domains) with ACE2 (via PDZ-binding motif); the interaction may enhance ACE2 membrane residence. In terms of processing, phosphorylated on serine residues. Detected in liver, kidney, pancreas, prostate, spleen, small intestine and placenta, in particular in the syncytiotrophoblast.

The protein localises to the cytoplasm. It localises to the apical cell membrane. It is found in the endomembrane system. Its subcellular location is the cell projection. The protein resides in the filopodium. The protein localises to the ruffle. It localises to the microvillus. Its function is as follows. Scaffold protein that connects plasma membrane proteins with members of the ezrin/moesin/radixin family and thereby helps to link them to the actin cytoskeleton and to regulate their surface expression. Necessary for recycling of internalized ADRB2. Was first known to play a role in the regulation of the activity and subcellular location of SLC9A3. Necessary for cAMP-mediated phosphorylation and inhibition of SLC9A3. May enhance Wnt signaling. May participate in HTR4 targeting to microvilli. Involved in the regulation of phosphate reabsorption in the renal proximal tubules. Involved in sperm capacitation. May participate in the regulation of the chloride and bicarbonate homeostasis in spermatozoa. In Homo sapiens (Human), this protein is Na(+)/H(+) exchange regulatory cofactor NHE-RF1.